We begin with the raw amino-acid sequence, 380 residues long: 3-isopropylmalate dehydratase large subunit (380 aa).

Residues Cys262, Cys320, and Cys323 each coordinate [4Fe-4S] cluster.

Belongs to the aconitase/IPM isomerase family. LeuC type 2 subfamily. Heterodimer of LeuC and LeuD. [4Fe-4S] cluster is required as a cofactor.

The enzyme catalyses (2R,3S)-3-isopropylmalate = (2S)-2-isopropylmalate. It participates in amino-acid biosynthesis; L-leucine biosynthesis; L-leucine from 3-methyl-2-oxobutanoate: step 2/4. Catalyzes the isomerization between 2-isopropylmalate and 3-isopropylmalate, via the formation of 2-isopropylmaleate. In Thermococcus kodakarensis (strain ATCC BAA-918 / JCM 12380 / KOD1) (Pyrococcus kodakaraensis (strain KOD1)), this protein is 3-isopropylmalate dehydratase large subunit.